A 159-amino-acid polypeptide reads, in one-letter code: Protein C2 (159 aa).

Residues 43 to 60 (KKRPPKLTWAPKKKRRKA) carry the Nuclear localization signal motif. Residues 65–81 (CGCSYYGGIDCEDGFTH) fold into a zinc finger. Positions 102-139 (PNLLPPPEHNNNGDGEQNNNITNQSQPQPAESVGSPDL) are disordered. Positions 110–124 (HNNNGDGEQNNNITN) are enriched in low complexity.

The protein belongs to the geminiviridae transcriptional activator protein family. Monomer. Suppress local silencing by interacting with and inactivating host adenosine kinase 2 (ADK2) in the cytoplasm. Interacts with and inhibits host SNF1 kinase.

It localises to the host cytoplasm. Functionally, acts as a suppressor of RNA-mediated gene silencing, also known as post-transcriptional gene silencing (PTGS), a mechanism of plant viral defense that limits the accumulation of viral RNAs. Suppresses the host RNA silencing by inhibiting adenosine kinase 2 (ADK2), a kinase involved in a general methylation pathway. Also suppresses the host basal defense by interacting with and inhibiting SNF1 kinase, a key regulator of cell metabolism implicated in innate antiviral defense. Determines pathogenicity. The chain is Protein C2 from Tomato pseudo-curly top virus (TPCTV).